A 393-amino-acid chain; its full sequence is Riboflavin biosynthesis protein RibBA (393 aa).

Residues 1 to 200 (MQFDNIDSAL…IDDLIEYRKK (200 aa)) form a DHBP synthase region. D-ribulose 5-phosphate is bound by residues 27-28 (RE), aspartate 32, 139-143 (RNGHT), and glutamate 163. Residue glutamate 28 participates in Mg(2+) binding. A Mg(2+)-binding site is contributed by histidine 142. Positions 201-393 (LEPEIEFKAK…TKKIKMGHLI (193 aa)) are GTP cyclohydrolase II. Position 249-253 (249-253 (RLHSA)) interacts with GTP. Zn(2+) contacts are provided by cysteine 254, cysteine 265, and cysteine 267. GTP is bound by residues glutamine 270, 291-293 (EGR), and threonine 313. Aspartate 325 (proton acceptor; for GTP cyclohydrolase activity) is an active-site residue. The active-site Nucleophile; for GTP cyclohydrolase activity is arginine 327. Residues serine 348 and lysine 353 each contribute to the GTP site.

This sequence in the N-terminal section; belongs to the DHBP synthase family. It in the C-terminal section; belongs to the GTP cyclohydrolase II family. The cofactor is Mg(2+). Requires Mn(2+) as cofactor. Zn(2+) is required as a cofactor.

It catalyses the reaction D-ribulose 5-phosphate = (2S)-2-hydroxy-3-oxobutyl phosphate + formate + H(+). It carries out the reaction GTP + 4 H2O = 2,5-diamino-6-hydroxy-4-(5-phosphoribosylamino)-pyrimidine + formate + 2 phosphate + 3 H(+). It functions in the pathway cofactor biosynthesis; riboflavin biosynthesis; 2-hydroxy-3-oxobutyl phosphate from D-ribulose 5-phosphate: step 1/1. Its pathway is cofactor biosynthesis; riboflavin biosynthesis; 5-amino-6-(D-ribitylamino)uracil from GTP: step 1/4. Functionally, catalyzes the conversion of D-ribulose 5-phosphate to formate and 3,4-dihydroxy-2-butanone 4-phosphate. Its function is as follows. Catalyzes the conversion of GTP to 2,5-diamino-6-ribosylamino-4(3H)-pyrimidinone 5'-phosphate (DARP), formate and pyrophosphate. The protein is Riboflavin biosynthesis protein RibBA of Staphylococcus aureus (strain MSSA476).